A 1485-amino-acid chain; its full sequence is Chromosome partition protein MukB (1485 aa).

Position 34–41 (34–41) interacts with ATP; it reads GGNGAGKS. Coiled-coil stretches lie at residues 311–480 and 519–665; these read EMAR…EAYR and GARL…RLSQ. Residues 666-783 form a flexible hinge region; that stretch reads PGGAEDARLI…SLPLFGRAAR (118 aa). Coiled coils occupy residues 832 to 1115 and 1209 to 1265; these read NDPE…QAKA and IDAI…LQSV.

This sequence belongs to the SMC family. MukB subfamily. As to quaternary structure, homodimerization via its hinge domain. Binds to DNA via its C-terminal region. Interacts, and probably forms a ternary complex, with MukE and MukF via its C-terminal region. The complex formation is stimulated by calcium or magnesium. Interacts with tubulin-related protein FtsZ.

Its subcellular location is the cytoplasm. It is found in the nucleoid. Its function is as follows. Plays a central role in chromosome condensation, segregation and cell cycle progression. Functions as a homodimer, which is essential for chromosome partition. Involved in negative DNA supercoiling in vivo, and by this means organize and compact chromosomes. May achieve or facilitate chromosome segregation by condensation DNA from both sides of a centrally located replisome during cell division. This Edwardsiella ictaluri (strain 93-146) protein is Chromosome partition protein MukB.